Here is a 439-residue protein sequence, read N- to C-terminus: Dolichyl-diphosphooligosaccharide--protein glycosyltransferase 48 kDa subunit (439 aa).

The signal sequence occupies residues 1 to 26; the sequence is MATRAARVWSGWWLLLLPLLGLAGAS. Topologically, residues 27–409 are lumenal; sequence GPRTLVLLDN…QYERFIPSAY (383 aa). A helical transmembrane segment spans residues 410–430; the sequence is PYYASAFSMMLGLFIFSVVFL. The Cytoplasmic portion of the chain corresponds to 431 to 439; the sequence is HMKEKEKSD.

Belongs to the DDOST 48 kDa subunit family. As to quaternary structure, component of the oligosaccharyltransferase (OST) complex. OST exists in two different complex forms which contain common core subunits RPN1, RPN2, OST48, OST4, DAD1 and TMEM258, either STT3A or STT3B as catalytic subunits, and form-specific accessory subunits. STT3A complex assembly occurs through the formation of 3 subcomplexes. Subcomplex 1 contains RPN1 and TMEM258, subcomplex 2 contains the STT3A-specific subunits STT3A, DC2/OSTC, and KCP2 as well as the core subunit OST4, and subcomplex 3 contains RPN2, DAD1, and OST48. The STT3A complex can form stable complexes with the Sec61 complex or with both the Sec61 and TRAP complexes. Interacts with SMIM22.

Its subcellular location is the endoplasmic reticulum membrane. Its pathway is protein modification; protein glycosylation. Subunit of the oligosaccharyl transferase (OST) complex that catalyzes the initial transfer of a defined glycan (Glc(3)Man(9)GlcNAc(2) in eukaryotes) from the lipid carrier dolichol-pyrophosphate to an asparagine residue within an Asn-X-Ser/Thr consensus motif in nascent polypeptide chains, the first step in protein N-glycosylation. N-glycosylation occurs cotranslationally and the complex associates with the Sec61 complex at the channel-forming translocon complex that mediates protein translocation across the endoplasmic reticulum (ER). All subunits are required for a maximal enzyme activity. Required for the assembly of both SST3A- and SS3B-containing OST complexes. In Bos taurus (Bovine), this protein is Dolichyl-diphosphooligosaccharide--protein glycosyltransferase 48 kDa subunit.